Reading from the N-terminus, the 410-residue chain is Acetate kinase (410 aa).

Residue Asn-7 participates in Mg(2+) binding. Lys-14 contacts ATP. Arg-88 serves as a coordination point for substrate. The active-site Proton donor/acceptor is Asp-145. Residues His-203 to Gly-207, Asp-278 to Arg-280, and Gly-326 to Asn-330 each bind ATP. Glu-379 contacts Mg(2+).

This sequence belongs to the acetokinase family. As to quaternary structure, homodimer. Mg(2+) serves as cofactor. It depends on Mn(2+) as a cofactor.

It is found in the cytoplasm. The enzyme catalyses acetate + ATP = acetyl phosphate + ADP. It functions in the pathway metabolic intermediate biosynthesis; acetyl-CoA biosynthesis; acetyl-CoA from acetate: step 1/2. Catalyzes the formation of acetyl phosphate from acetate and ATP. Can also catalyze the reverse reaction. In Onion yellows phytoplasma (strain OY-M), this protein is Acetate kinase.